Here is a 957-residue protein sequence, read N- to C-terminus: Plasma membrane ATPase 1 (957 aa).

The Cytoplasmic portion of the chain corresponds to 1 to 66; that stretch reads MGEEKPEVLD…EKKDSKLLKF (66 aa). The helical transmembrane segment at 67 to 86 threads the bilayer; that stretch reads LGFMWNPLSWVMEAAAIMAI. The Extracellular portion of the chain corresponds to 87–98; it reads ALANGGGKPPDW. Residues 99–119 form a helical membrane-spanning segment; the sequence is QDFVGIITLLIINSTISFIEE. Topologically, residues 120-248 are cytoplasmic; it reads NNAGNAAAAL…GHFQKVLTAI (129 aa). A helical transmembrane segment spans residues 249–269; the sequence is GNFCICSIAVGMIIEIIVMYP. Over 270–279 the chain is Extracellular; it reads IQHRAYRPGI. The chain crosses the membrane as a helical span at residues 280 to 301; sequence DNLLVLLIGGIPIAMPTVLSVT. Topologically, residues 302 to 648 are cytoplasmic; sequence MAIGSHRLAQ…TSRAIFQRMK (347 aa). Asp-334 functions as the 4-aspartylphosphate intermediate in the catalytic mechanism. Mg(2+)-binding residues include Asp-593 and Asp-597. A helical membrane pass occupies residues 649-670; the sequence is NYTIYAVSITIRIVLGFMLLAL. The Extracellular portion of the chain corresponds to 671–675; that stretch reads IWKFD. The helical transmembrane segment at 676–698 threads the bilayer; the sequence is FPPFMVLIIAILNDGTIMTISKD. Residues 699-714 lie on the Cytoplasmic side of the membrane; sequence RVKPSPLPDSWKLAEI. Residues 715-735 form a helical membrane-spanning segment; the sequence is FTTGIVLGGYLAMMTVIFFWA. Residues 736-760 are Extracellular-facing; that stretch reads AYKTNFFPHVFGVSTLEKTATDDFR. The helical transmembrane segment at 761 to 781 threads the bilayer; that stretch reads KLASAIYLQVSIISQALIFVT. The Cytoplasmic segment spans residues 782 to 793; the sequence is RSRSWSFVERPG. A helical membrane pass occupies residues 794-814; the sequence is FLLVIAFVIAQLVATLIAVYA. The Extracellular segment spans residues 815–823; the sequence is NWSFAAIEG. The helical transmembrane segment at 824–844 threads the bilayer; the sequence is IGWGWAGVIWIYNLVFYIPLD. Residues 845-957 are Cytoplasmic-facing; the sequence is IIKFFIRYAL…IETIQQAYTV (113 aa).

Belongs to the cation transport ATPase (P-type) (TC 3.A.3) family. Type IIIA subfamily. Expressed in roots, stems, leaves from both vegetative and flowering plants, and flowers at early and late stages of development with highest expression levels found in flowers and stem.

It is found in the cell membrane. It catalyses the reaction ATP + H2O + H(+)(in) = ADP + phosphate + 2 H(+)(out). The plasma membrane ATPase of plants and fungi is a hydrogen ion pump. The proton gradient it generates drives the active transport of nutrients by H(+)-symport. The resulting external acidification and/or internal alkinization may mediate growth responses. This is Plasma membrane ATPase 1 (PMA1) from Nicotiana plumbaginifolia (Leadwort-leaved tobacco).